The chain runs to 365 residues: Succinyl-diaminopimelate desuccinylase (365 aa).

His64 serves as a coordination point for Zn(2+). Asp66 is a catalytic residue. Asp95 is a binding site for Zn(2+). Glu125 functions as the Proton acceptor in the catalytic mechanism. Glu126, Glu154, and His339 together coordinate Zn(2+).

It belongs to the peptidase M20A family. DapE subfamily. In terms of assembly, homodimer. Requires Zn(2+) as cofactor. It depends on Co(2+) as a cofactor.

It catalyses the reaction N-succinyl-(2S,6S)-2,6-diaminopimelate + H2O = (2S,6S)-2,6-diaminopimelate + succinate. The protein operates within amino-acid biosynthesis; L-lysine biosynthesis via DAP pathway; LL-2,6-diaminopimelate from (S)-tetrahydrodipicolinate (succinylase route): step 3/3. In terms of biological role, catalyzes the hydrolysis of N-succinyl-L,L-diaminopimelic acid (SDAP), forming succinate and LL-2,6-diaminopimelate (DAP), an intermediate involved in the bacterial biosynthesis of lysine and meso-diaminopimelic acid, an essential component of bacterial cell walls. This is Succinyl-diaminopimelate desuccinylase from Nautilia profundicola (strain ATCC BAA-1463 / DSM 18972 / AmH).